An 88-amino-acid chain; its full sequence is Large ribosomal subunit protein eL15 (88 aa).

It belongs to the eukaryotic ribosomal protein eL15 family.

The sequence is that of Large ribosomal subunit protein eL15 (RPL15) from Brassica napus (Rape).